Reading from the N-terminus, the 401-residue chain is O-methyltransferase mfmE (401 aa).

S-adenosyl-L-methionine is bound by residues G243 to G244 and D268. Catalysis depends on H308, which acts as the Proton acceptor.

Belongs to the class I-like SAM-binding methyltransferase superfamily. Cation-independent O-methyltransferase family. COMT subfamily.

Its pathway is secondary metabolite biosynthesis; terpenoid biosynthesis. O-methyltransferase; part of the gene cluster that mediates the biosynthesis of the phthalide-terpenoid hybrid 11'-O-desmethylfendlerol. Within the pathway, mfmE catalyzes the 7-O-methylation of the phthalide 5,7-dihydroxy-4-(hydroxymethyl)-6-methylphthalide to yield 5-hydroxy-4-(hydroxymethyl)-7-methoxy-6-methylphthalide. The biosynthesis of 11'-O-desmethylfendlerol begins with the NR-PKS mfmB that forms 3,5-dimethylorsellinic acid (DMOA), which is then transformed into the phthalide 5,7-dihydroxy-4-(hydroxymethyl)-6-methylphthalide by the cytochrome P450 monooxygenase mfmA and the hydrolase mfmC. Subsequently, the methyltransferase mfmE catalyzes 7-O-methylation to yield 5-hydroxy-4-(hydroxymethyl)-7-methoxy-6-methylphthalide, which undergoes C-3 hydroxylation by the cytochrome P450 monooxygenase mfmF. The resultant cyclopolic acid (2,5-dihydroxy-4-(hydroxymethyl)-7-methoxy-6-methylphthalide) is then farnesylated by the DMATS-type prenyltransferase mfmD to afford 5-O-farnesylcyclopolic acid. Finally, the Pyr4-family terpene cyclase mfmH cyclizes the farnesyl moiety of 5-O-farnesylcyclopolic acid into a drimane-like structure, thus completing the biosynthesis of 11'-O-desmethylfendlerol. The sequence is that of O-methyltransferase mfmE from Annulohypoxylon moriforme (Filamentous fungus).